A 209-amino-acid polypeptide reads, in one-letter code: ATP phosphoribosyltransferase (209 aa).

It belongs to the ATP phosphoribosyltransferase family. Short subfamily. In terms of assembly, heteromultimer composed of HisG and HisZ subunits.

The protein resides in the cytoplasm. The enzyme catalyses 1-(5-phospho-beta-D-ribosyl)-ATP + diphosphate = 5-phospho-alpha-D-ribose 1-diphosphate + ATP. It participates in amino-acid biosynthesis; L-histidine biosynthesis; L-histidine from 5-phospho-alpha-D-ribose 1-diphosphate: step 1/9. Functionally, catalyzes the condensation of ATP and 5-phosphoribose 1-diphosphate to form N'-(5'-phosphoribosyl)-ATP (PR-ATP). Has a crucial role in the pathway because the rate of histidine biosynthesis seems to be controlled primarily by regulation of HisG enzymatic activity. The chain is ATP phosphoribosyltransferase from Caldicellulosiruptor saccharolyticus (strain ATCC 43494 / DSM 8903 / Tp8T 6331).